We begin with the raw amino-acid sequence, 101 residues long: Small ribosomal subunit protein uS14 (101 aa).

Belongs to the universal ribosomal protein uS14 family. In terms of assembly, part of the 30S ribosomal subunit. Contacts proteins S3 and S10.

Binds 16S rRNA, required for the assembly of 30S particles and may also be responsible for determining the conformation of the 16S rRNA at the A site. This chain is Small ribosomal subunit protein uS14, found in Histophilus somni (strain 2336) (Haemophilus somnus).